Reading from the N-terminus, the 514-residue chain is GMP synthase [glutamine-hydrolyzing] (514 aa).

One can recognise a Glutamine amidotransferase type-1 domain in the interval 9–199 (KIIVLDFGSQ…ALNVCGCKGD (191 aa)). Catalysis depends on Cys-86, which acts as the Nucleophile. Residues His-173 and Glu-175 contribute to the active site. In terms of domain architecture, GMPS ATP-PPase spans 200–389 (WTMENFSEVE…LGMPDAIVWR (190 aa)). Residue 227 to 233 (SGGVDSS) participates in ATP binding.

As to quaternary structure, homodimer.

It catalyses the reaction XMP + L-glutamine + ATP + H2O = GMP + L-glutamate + AMP + diphosphate + 2 H(+). It functions in the pathway purine metabolism; GMP biosynthesis; GMP from XMP (L-Gln route): step 1/1. Catalyzes the synthesis of GMP from XMP. The polypeptide is GMP synthase [glutamine-hydrolyzing] (Listeria monocytogenes serotype 4b (strain F2365)).